A 228-amino-acid chain; its full sequence is Ras-related protein Rab-32D (228 aa).

GTP is bound at residue 16–23 (GDVNVGKT). The Effector region motif lies at 38–46 (YKSTIGADF). GTP-binding positions include 64–68 (DTAGQ) and 128–131 (NKSD). Residues 183 to 228 (SDNEQFNDSPDEETSSITLLGTSKKHDNTNPNKPSTSSPSSCFNCK) are disordered. Residues 185 to 196 (NEQFNDSPDEET) show a composition bias toward acidic residues. A compositionally biased stretch (low complexity) spans 211–228 (TNPNKPSTSSPSSCFNCK). Cys224 carries the S-geranylgeranyl cysteine lipid modification.

It belongs to the small GTPase superfamily. Rab family.

This is Ras-related protein Rab-32D (rab32D) from Dictyostelium discoideum (Social amoeba).